The sequence spans 145 residues: uncharacterized protein (145 aa).

It belongs to the methyltransferase superfamily.

Probable methyltransferase. This is an uncharacterized protein from Schizosaccharomyces pombe (strain 972 / ATCC 24843) (Fission yeast).